A 241-amino-acid chain; its full sequence is Triosephosphate isomerase (241 aa).

9 to 11 (NWK) contacts substrate. The Electrophile role is filled by H96. E165 acts as the Proton acceptor in catalysis. Substrate is bound by residues G171, S204, and 225 to 226 (GG).

Belongs to the triosephosphate isomerase family. As to quaternary structure, homodimer.

The protein localises to the cytoplasm. It catalyses the reaction D-glyceraldehyde 3-phosphate = dihydroxyacetone phosphate. Its pathway is carbohydrate biosynthesis; gluconeogenesis. The protein operates within carbohydrate degradation; glycolysis; D-glyceraldehyde 3-phosphate from glycerone phosphate: step 1/1. In terms of biological role, involved in the gluconeogenesis. Catalyzes stereospecifically the conversion of dihydroxyacetone phosphate (DHAP) to D-glyceraldehyde-3-phosphate (G3P). The sequence is that of Triosephosphate isomerase from Prochlorococcus marinus subsp. pastoris (strain CCMP1986 / NIES-2087 / MED4).